The following is a 337-amino-acid chain: Probable uridine nucleosidase 2 (337 aa).

Residue histidine 260 is part of the active site.

It belongs to the IUNH family.

It is found in the cytoplasm. The catalysed reaction is uridine + H2O = D-ribose + uracil. Its function is as follows. Involved in pyrimidine breakdown. The sequence is that of Probable uridine nucleosidase 2 (URH2) from Oryza sativa subsp. japonica (Rice).